Consider the following 213-residue polypeptide: CASP-like protein UU2 (213 aa).

A disordered region spans residues 1–26 (MEDPKGAWQSDVFDNGRDFKPHDKAP). At 1-53 (MEDPKGAWQSDVFDNGRDFKPHDKAPANVTAGTTPPMYNVGAGGSEGNSKALS) the chain is on the cytoplasmic side. Residues 14 to 25 (DNGRDFKPHDKA) show a composition bias toward basic and acidic residues. A helical transmembrane segment spans residues 54–74 (IISIVLRCLSIMFNVVSLGVI). At 75-96 (ASNQGKSYFVVWRTLNSSNMQY) the chain is on the extracellular side. N-linked (GlcNAc...) asparagine glycosylation is present at Asn90. Residues 97 to 117 (LFAINVIVLVYCVVQLILSII) traverse the membrane as a helical segment. At 118–137 (NLVQGKMVLSGPTQPASTIT) the chain is on the cytoplasmic side. A helical membrane pass occupies residues 138 to 158 (YICDQGLTYMLMAGFGAGVAL). The Extracellular portion of the chain corresponds to 159-184 (QASVDKGESGMLDCSGANEFCGKNKA). The helical transmembrane segment at 185 to 205 (SAALSFLGFVCIALSANLNYL) threads the bilayer. Topologically, residues 206–213 (RLYFMAAK) are cytoplasmic.

Belongs to the Casparian strip membrane proteins (CASP) family. In terms of assembly, homodimer and heterodimers.

It localises to the cell membrane. This chain is CASP-like protein UU2, found in Physcomitrium patens (Spreading-leaved earth moss).